Reading from the N-terminus, the 689-residue chain is Glycine--tRNA ligase beta subunit (689 aa).

This sequence belongs to the class-II aminoacyl-tRNA synthetase family. As to quaternary structure, tetramer of two alpha and two beta subunits.

Its subcellular location is the cytoplasm. It catalyses the reaction tRNA(Gly) + glycine + ATP = glycyl-tRNA(Gly) + AMP + diphosphate. The sequence is that of Glycine--tRNA ligase beta subunit from Shewanella woodyi (strain ATCC 51908 / MS32).